A 2551-amino-acid chain; its full sequence is Probable polyketide synthase 13 (2551 aa).

One can recognise a Ketosynthase family 3 (KS3) domain in the interval 10 to 434 (ENDVAIIGIG…GSNCCLILSQ (425 aa)). Catalysis depends on for beta-ketoacyl synthase activity residues C176, H317, and H358. Residues 621-654 (GIEVSFIIGHSLGEIPAAYCSGMINIDTLCYLIY) are acyl/malonyl transferase. The For acyl/malonyl transferase activity role is filled by S631. The interval 928-1057 (TDNLGYLNEN…GDFQLSNHSS (130 aa)) is N-terminal hotdog fold. The 299-residue stretch at 928-1226 (TDNLGYLNEN…CTSLTPIKES (299 aa)) folds into the PKS/mFAS DH domain. The active-site Proton acceptor; for dehydratase activity is H961. The segment at 1076 to 1226 (NLTKLSRDEL…CTSLTPIKES (151 aa)) is C-terminal hotdog fold. D1136 functions as the Proton donor; for dehydratase activity in the catalytic mechanism. Residues 2465–2542 (DCQTIIKDSF…SSIQYTINSF (78 aa)) form the Carrier domain. S2502 carries the post-translational modification O-(pantetheine 4'-phosphoryl)serine.

Requires pantetheine 4'-phosphate as cofactor.

Functionally, probable polyketide synthase. The polypeptide is Probable polyketide synthase 13 (pks13) (Dictyostelium discoideum (Social amoeba)).